We begin with the raw amino-acid sequence, 236 residues long: Ribose-5-phosphate isomerase A (236 aa).

Substrate contacts are provided by residues 31–34, 84–87, and 97–100; these read TGST, DGAD, and KGGG. E106 serves as the catalytic Proton acceptor. K124 is a binding site for substrate.

This sequence belongs to the ribose 5-phosphate isomerase family. In terms of assembly, homodimer.

The enzyme catalyses aldehydo-D-ribose 5-phosphate = D-ribulose 5-phosphate. It participates in carbohydrate degradation; pentose phosphate pathway; D-ribose 5-phosphate from D-ribulose 5-phosphate (non-oxidative stage): step 1/1. Its function is as follows. Catalyzes the reversible conversion of ribose-5-phosphate to ribulose 5-phosphate. The polypeptide is Ribose-5-phosphate isomerase A (Polynucleobacter necessarius subsp. necessarius (strain STIR1)).